The sequence spans 202 residues: Dephospho-CoA kinase (202 aa).

Residues 3–202 (TIGITGGIGS…TKRPNPPDRL (200 aa)) enclose the DPCK domain. Residue 11–16 (GSGKSV) participates in ATP binding. The interval 138-161 (RAMARDGSSAETMRQRMLSQEREQ) is disordered.

The protein belongs to the CoaE family.

The protein localises to the cytoplasm. The enzyme catalyses 3'-dephospho-CoA + ATP = ADP + CoA + H(+). It participates in cofactor biosynthesis; coenzyme A biosynthesis; CoA from (R)-pantothenate: step 5/5. Functionally, catalyzes the phosphorylation of the 3'-hydroxyl group of dephosphocoenzyme A to form coenzyme A. In Porphyromonas gingivalis (strain ATCC BAA-308 / W83), this protein is Dephospho-CoA kinase.